The primary structure comprises 212 residues: Floral homeotic protein PMADS 2 (212 aa).

The 56-residue stretch at 3-58 folds into the MADS-box domain; sequence RGKIEIKRIENSSNRQVTYSKRRNGIIKKAKEITVLCDAKVSLIIFGNSGKMHEYC. One can recognise a K-box domain in the interval 84–170; it reads HENLSNEIDR…QYALHQKEMA (87 aa).

Predominantly expressed in petals and stamens, less in carpels and sepals.

Its subcellular location is the nucleus. Its function is as follows. Transcription factor involved in the genetic control of flower development. The sequence is that of Floral homeotic protein PMADS 2 (PMADS2) from Petunia hybrida (Petunia).